The following is a 725-amino-acid chain: Polyribonucleotide nucleotidyltransferase (725 aa).

Mg(2+) contacts are provided by D506 and D512. One can recognise a KH domain in the interval 571–631; sequence PLIEQFAIDP…QNIIDACEHI (61 aa). The region spanning 657-724 is the S1 motif domain; it reads DEVVIGKVER…KKDRIELSSA (68 aa).

Belongs to the polyribonucleotide nucleotidyltransferase family. Mg(2+) serves as cofactor.

The protein resides in the cytoplasm. The enzyme catalyses RNA(n+1) + phosphate = RNA(n) + a ribonucleoside 5'-diphosphate. Its function is as follows. Involved in mRNA degradation. Catalyzes the phosphorolysis of single-stranded polyribonucleotides processively in the 3'- to 5'-direction. This Aliarcobacter butzleri (strain RM4018) (Arcobacter butzleri) protein is Polyribonucleotide nucleotidyltransferase.